We begin with the raw amino-acid sequence, 450 residues long: Bifunctional protein GlmU (450 aa).

The pyrophosphorylase stretch occupies residues 1 to 236 (MTAHKPFSAV…AWEVSGVNNR (236 aa)). Residues 12–15 (LAAG), K26, Q79, 84–85 (GT), 107–109 (YGD), G147, E162, N177, and N234 each bind UDP-N-acetyl-alpha-D-glucosamine. D109 lines the Mg(2+) pocket. N234 is a Mg(2+) binding site. Residues 237–257 (AELASLESLWQNRKRQDVMKD) form a linker region. Residues 258 to 450 (GASLIAPETV…KKFRQRKKKK (193 aa)) are N-acetyltransferase. 2 residues coordinate UDP-N-acetyl-alpha-D-glucosamine: R323 and K341. H353 (proton acceptor) is an active-site residue. Residues Y356 and N367 each coordinate UDP-N-acetyl-alpha-D-glucosamine. Acetyl-CoA is bound by residues 376–377 (NY), S395, A413, and R430.

In the N-terminal section; belongs to the N-acetylglucosamine-1-phosphate uridyltransferase family. It in the C-terminal section; belongs to the transferase hexapeptide repeat family. Homotrimer. The cofactor is Mg(2+).

The protein localises to the cytoplasm. The enzyme catalyses alpha-D-glucosamine 1-phosphate + acetyl-CoA = N-acetyl-alpha-D-glucosamine 1-phosphate + CoA + H(+). It carries out the reaction N-acetyl-alpha-D-glucosamine 1-phosphate + UTP + H(+) = UDP-N-acetyl-alpha-D-glucosamine + diphosphate. Its pathway is nucleotide-sugar biosynthesis; UDP-N-acetyl-alpha-D-glucosamine biosynthesis; N-acetyl-alpha-D-glucosamine 1-phosphate from alpha-D-glucosamine 6-phosphate (route II): step 2/2. It functions in the pathway nucleotide-sugar biosynthesis; UDP-N-acetyl-alpha-D-glucosamine biosynthesis; UDP-N-acetyl-alpha-D-glucosamine from N-acetyl-alpha-D-glucosamine 1-phosphate: step 1/1. The protein operates within bacterial outer membrane biogenesis; LPS lipid A biosynthesis. In terms of biological role, catalyzes the last two sequential reactions in the de novo biosynthetic pathway for UDP-N-acetylglucosamine (UDP-GlcNAc). The C-terminal domain catalyzes the transfer of acetyl group from acetyl coenzyme A to glucosamine-1-phosphate (GlcN-1-P) to produce N-acetylglucosamine-1-phosphate (GlcNAc-1-P), which is converted into UDP-GlcNAc by the transfer of uridine 5-monophosphate (from uridine 5-triphosphate), a reaction catalyzed by the N-terminal domain. The protein is Bifunctional protein GlmU of Zymomonas mobilis subsp. mobilis (strain ATCC 31821 / ZM4 / CP4).